We begin with the raw amino-acid sequence, 120 residues long: UPF0145 protein UNCMA_30400 (120 aa).

Belongs to the UPF0145 family.

The sequence is that of UPF0145 protein UNCMA_30400 from Methanocella arvoryzae (strain DSM 22066 / NBRC 105507 / MRE50).